We begin with the raw amino-acid sequence, 423 residues long: Protein phosphatase 2C 77 (423 aa).

Residues 74–95 (GDEINGSDEFDPRSMNQSEKKV) are disordered. Residues 112 to 411 (LYGVTSICGR…DNISVVVVDL (300 aa)) form the PPM-type phosphatase domain. Residues Asp165, Asp251, and Ser252 each coordinate Mg(2+). A disulfide bridge connects residues Cys257 and Cys331. Mg(2+) is bound by residues Asp337 and Asp402.

This sequence belongs to the PP2C family. Interacts with SPK1, CIPK15/PKS3, GPX3, SCAR1, SCAR2, SCAR3 and SCARL. Also interacts with CIPK24/SOS2. Binds to the fibrillin precursor protein. Interacts with ABA-bounded PYR1, PYL1, PYL2, PYL3, PYL4, PYL5, PYL6, PYL8 and PYL9, and with free PYL2, PYL3 and PYL4. Interacts with and represses GHR1, and, to a lesser extent, SRK2E/OST1. It depends on Mg(2+) as a cofactor. Requires Mn(2+) as cofactor.

It catalyses the reaction O-phospho-L-seryl-[protein] + H2O = L-seryl-[protein] + phosphate. The enzyme catalyses O-phospho-L-threonyl-[protein] + H2O = L-threonyl-[protein] + phosphate. Phosphatase activity repressed by oxidized ATGPX3, free fatty acids (e.g. arachidonic acid (20:4) and Linolenic acid (18:3)) and by H(2)O(2). Repressed by PYR/PYL/RCAR ABA receptors in an ABA-dependent manner. Repressor of the abscisic acid (ABA) signaling pathway that regulates numerous ABA responses, such as stomatal closure, osmotic water permeability of the plasma membrane (Pos), high light stress, response to glucose, seed germination and inhibition of vegetative growth. During the stomatal closure regulation, modulates the inward calcium-channel permeability as well as H(2)O(2) and oxidative burst in response to ABA and dehydration. Represses GHR1 and, to some extent, SRK2E/OST1, kinases involved in the regulation of SLAC1-dependent stomatal closure. Controls negatively fibrillin that is involved in mediating ABA-induced photoprotection. May be implicated in ABA content regulation. Involved in acquired thermotolerance of root growth and seedling survival. Required for the Erwinia amylovora harpin-induced (HrpN) drought tolerance. Involved in the hydrotropic response. The sequence is that of Protein phosphatase 2C 77 from Arabidopsis thaliana (Mouse-ear cress).